Reading from the N-terminus, the 328-residue chain is Lateral signaling target 1 protein (328 aa).

Disordered stretches follow at residues 56–78 (SSQD…GLRS), 108–135 (PTHY…SASS), and 177–200 (PVQP…RLNG). Residues 178 to 200 (VQPSTSTSRNNVSQISGSSRLNG) show a composition bias toward polar residues.

In terms of assembly, interacts with fbf-2; the interaction probably mediates the release of the C-terminal tail of fbf-2 from the RNA-binding domain, thereby altering its RNA-binding affinity.

Functionally, plays a role in germline stem cell maintenance, perhaps acting in concert with mRNA-binding factor fbf-2. May regulate fbf-2 by modulating RNA-binding and perhaps by competition with the intramolecular interaction between the fbf-2 RNA-binding domain and C-terminal tail. This is Lateral signaling target 1 protein from Caenorhabditis elegans.